The following is an 87-amino-acid chain: Chaperone NapD (87 aa).

It belongs to the NapD family. As to quaternary structure, interacts with the cytoplasmic NapA precursor.

It is found in the cytoplasm. Its function is as follows. Chaperone for NapA, the catalytic subunit of the periplasmic nitrate reductase. It binds directly and specifically to the twin-arginine signal peptide of NapA, preventing premature interaction with the Tat translocase and premature export. In Escherichia coli O157:H7, this protein is Chaperone NapD.